The following is a 320-amino-acid chain: Malate dehydrogenase (320 aa).

NAD(+) is bound by residues 10 to 15 (GAGQIG) and aspartate 34. Positions 83 and 89 each coordinate substrate. Residues asparagine 96 and 119–121 (ITN) contribute to the NAD(+) site. Residues asparagine 121 and arginine 152 each coordinate substrate. Histidine 176 acts as the Proton acceptor in catalysis.

It belongs to the LDH/MDH superfamily. MDH type 3 family.

The enzyme catalyses (S)-malate + NAD(+) = oxaloacetate + NADH + H(+). Its function is as follows. Catalyzes the reversible oxidation of malate to oxaloacetate. The sequence is that of Malate dehydrogenase from Roseobacter denitrificans (strain ATCC 33942 / OCh 114) (Erythrobacter sp. (strain OCh 114)).